The following is a 198-amino-acid chain: Large ribosomal subunit protein uL13B (198 aa).

The residue at position 2 (serine 2) is an N-acetylserine; partial. Serine 43 carries the post-translational modification Phosphoserine. A Glycyl lysine isopeptide (Lys-Gly) (interchain with G-Cter in ubiquitin) cross-link involves residue lysine 176. Serine 181, serine 185, and serine 187 each carry phosphoserine.

This sequence belongs to the universal ribosomal protein uL13 family. Component of the large ribosomal subunit (LSU). Mature yeast ribosomes consist of a small (40S) and a large (60S) subunit. The 40S small subunit contains 1 molecule of ribosomal RNA (18S rRNA) and 33 different proteins (encoded by 57 genes). The large 60S subunit contains 3 rRNA molecules (25S, 5.8S and 5S rRNA) and 46 different proteins (encoded by 81 genes). N-terminally acetylated by acetyltransferase NatA.

The protein localises to the cytoplasm. Its function is as follows. Component of the ribosome, a large ribonucleoprotein complex responsible for the synthesis of proteins in the cell. The small ribosomal subunit (SSU) binds messenger RNAs (mRNAs) and translates the encoded message by selecting cognate aminoacyl-transfer RNA (tRNA) molecules. The large subunit (LSU) contains the ribosomal catalytic site termed the peptidyl transferase center (PTC), which catalyzes the formation of peptide bonds, thereby polymerizing the amino acids delivered by tRNAs into a polypeptide chain. The nascent polypeptides leave the ribosome through a tunnel in the LSU and interact with protein factors that function in enzymatic processing, targeting, and the membrane insertion of nascent chains at the exit of the ribosomal tunnel. This Saccharomyces cerevisiae (strain ATCC 204508 / S288c) (Baker's yeast) protein is Large ribosomal subunit protein uL13B.